A 162-amino-acid chain; its full sequence is MNCPDCGNGRTRVIDTGASSDGASVRRRRECQRCSFRFTTYERPEWKSLQVKKRDGTIESFDQQKLRTGIERAVEKRGVAETTVTALVDDIESELQDREARIVSSSLIGELVSENLRTLDKVAYIRFVSVYKAFSEPQEFLKELDAVLGAELDDFEASNSSQ.

The disordered stretch occupies residues 1 to 21; sequence MNCPDCGNGRTRVIDTGASSD. A zinc finger spans residues 3–34; the sequence is CPDCGNGRTRVIDTGASSDGASVRRRRECQRC. One can recognise an ATP-cone domain in the interval 49-139; the sequence is LQVKKRDGTI…VYKAFSEPQE (91 aa).

Belongs to the NrdR family. Zn(2+) serves as cofactor.

Its function is as follows. Negatively regulates transcription of bacterial ribonucleotide reductase nrd genes and operons by binding to NrdR-boxes. The polypeptide is Transcriptional repressor NrdR (Natronomonas pharaonis (strain ATCC 35678 / DSM 2160 / CIP 103997 / JCM 8858 / NBRC 14720 / NCIMB 2260 / Gabara) (Halobacterium pharaonis)).